The following is a 598-amino-acid chain: Glutamyl-tRNA(Gln) amidotransferase subunit E (598 aa).

Belongs to the GatB/GatE family. GatE subfamily. As to quaternary structure, heterodimer of GatD and GatE.

The enzyme catalyses L-glutamyl-tRNA(Gln) + L-glutamine + ATP + H2O = L-glutaminyl-tRNA(Gln) + L-glutamate + ADP + phosphate + H(+). In terms of biological role, allows the formation of correctly charged Gln-tRNA(Gln) through the transamidation of misacylated Glu-tRNA(Gln) in organisms which lack glutaminyl-tRNA synthetase. The reaction takes place in the presence of glutamine and ATP through an activated gamma-phospho-Glu-tRNA(Gln). The GatDE system is specific for glutamate and does not act on aspartate. The polypeptide is Glutamyl-tRNA(Gln) amidotransferase subunit E (Thermoplasma volcanium (strain ATCC 51530 / DSM 4299 / JCM 9571 / NBRC 15438 / GSS1)).